We begin with the raw amino-acid sequence, 344 residues long: Melanocyte-stimulating hormone receptor (344 aa).

The Extracellular portion of the chain corresponds to 1–37 (MPMQGAQRKLLGSLNSTPTATSNPGLAANHTGAPCLE). Asn-29 carries an N-linked (GlcNAc...) asparagine glycan. A helical transmembrane segment spans residues 38–63 (VSIPDGLFLSLGLVSLVENVLVVAAI). Topologically, residues 64–72 (AKNRNLHSS) are cytoplasmic. A helical transmembrane segment spans residues 73-93 (MYXFICCLALSDLLVSGSNML). The Extracellular portion of the chain corresponds to 94-118 (ETAIILLLEAGTLATRASVVQQLHN). A helical membrane pass occupies residues 119-140 (TIDVLTCSSMLCSLCFLGAIAV). Topologically, residues 141 to 163 (DRYISIFYALRYHSIMTLPRAQR) are cytoplasmic. The helical transmembrane segment at 164-183 (AIAAIWVASVLSSTLFITYY) threads the bilayer. Residues 184–191 (DHAAVLLC) lie on the Extracellular side of the membrane. Residues 192 to 211 (LVVFFLAMLVLMAVLYVHML) traverse the membrane as a helical segment. Topologically, residues 212–240 (ARACQHAQGIIRLHNRQLPAHKGFGLRGA) are cytoplasmic. Residues 241-266 (ATLTILLGIFFLCWGPFFLHLTLVVF) traverse the membrane as a helical segment. Residues 267-279 (CPQHLTCNCIFKN) lie on the Extracellular side of the membrane. A helical transmembrane segment spans residues 280 to 300 (FKVFLTLIICNTIIDPLIYAF). Residues 301-344 (RSQELRRTLKEVLLCSSWPGCWAEGGGDSVWPGSCVTLRGPLPP) are Cytoplasmic-facing. Residue Cys-315 is the site of S-palmitoyl cysteine attachment.

It belongs to the G-protein coupled receptor 1 family. Interacts with MGRN1, but does not undergo MGRN1-mediated ubiquitination; this interaction competes with GNAS-binding and thus inhibits agonist-induced cAMP production. Interacts with OPN3; the interaction results in a decrease in MC1R-mediated cAMP signaling and ultimately a decrease in melanin production in melanocytes.

Its subcellular location is the cell membrane. In terms of biological role, receptor for MSH (alpha, beta and gamma) and ACTH. The activity of this receptor is mediated by G proteins which activate adenylate cyclase. Mediates melanogenesis, the production of eumelanin (black/brown) and phaeomelanin (red/yellow), via regulation of cAMP signaling in melanocytes. The protein is Melanocyte-stimulating hormone receptor (MC1R) of Callithrix geoffroyi (Geoffroy's marmoset).